The primary structure comprises 338 residues: tRNA N6-adenosine threonylcarbamoyltransferase (338 aa).

3 residues coordinate Fe cation: histidine 110, histidine 114, and tyrosine 131. Substrate is bound by residues 131 to 135 (YVSGG), aspartate 163, aspartate 184, and asparagine 268. Residue aspartate 296 participates in Fe cation binding.

The protein belongs to the KAE1 / TsaD family. Requires Fe(2+) as cofactor.

The protein resides in the cytoplasm. It carries out the reaction L-threonylcarbamoyladenylate + adenosine(37) in tRNA = N(6)-L-threonylcarbamoyladenosine(37) in tRNA + AMP + H(+). Functionally, required for the formation of a threonylcarbamoyl group on adenosine at position 37 (t(6)A37) in tRNAs that read codons beginning with adenine. Is probably involved in the transfer of the threonylcarbamoyl moiety of threonylcarbamoyl-AMP (TC-AMP) to the N6 group of A37. The sequence is that of tRNA N6-adenosine threonylcarbamoyltransferase from Staphylothermus marinus (strain ATCC 43588 / DSM 3639 / JCM 9404 / F1).